Reading from the N-terminus, the 1069-residue chain is Carbamoyl phosphate synthase large chain (1069 aa).

Residues 1 to 401 form a carboxyphosphate synthetic domain region; sequence MPLNKDIKKV…AFLKGIRSLE (401 aa). ATP is bound by residues arginine 129, arginine 169, glycine 175, glycine 176, lysine 208, valine 210, glutamate 215, glycine 241, isoleucine 242, histidine 243, glutamine 284, and glutamate 298. The ATP-grasp 1 domain maps to 133-327; sequence RDMMNRIGEP…IAKLAAKIAL (195 aa). Glutamine 284, glutamate 298, and asparagine 300 together coordinate Mg(2+). Positions 284, 298, and 300 each coordinate Mn(2+). Residues 402 to 549 are oligomerization domain; it reads IGKYSLDHNK…YSTYEQYDEV (148 aa). Positions 550 to 932 are carbamoyl phosphate synthetic domain; sequence EVSNNKKVIV…ALYKGFVGAY (383 aa). Residues 674–864 enclose the ATP-grasp 2 domain; the sequence is DELLERLGIS…IVDLATQVML (191 aa). Positions 710, 749, 751, 755, 780, 781, 782, 783, 823, and 835 each coordinate ATP. Residues glutamine 823, glutamate 835, and asparagine 837 each contribute to the Mg(2+) site. Mn(2+)-binding residues include glutamine 823, glutamate 835, and asparagine 837. The MGS-like domain maps to 932–1069; sequence YMYPSKEKGK…KDLEVFNIAK (138 aa). Positions 933–1069 are allosteric domain; it reads MYPSKEKGKI…KDLEVFNIAK (137 aa).

It belongs to the CarB family. As to quaternary structure, composed of two chains; the small (or glutamine) chain promotes the hydrolysis of glutamine to ammonia, which is used by the large (or ammonia) chain to synthesize carbamoyl phosphate. Tetramer of heterodimers (alpha,beta)4. The cofactor is Mg(2+). Mn(2+) serves as cofactor.

It carries out the reaction hydrogencarbonate + L-glutamine + 2 ATP + H2O = carbamoyl phosphate + L-glutamate + 2 ADP + phosphate + 2 H(+). The enzyme catalyses hydrogencarbonate + NH4(+) + 2 ATP = carbamoyl phosphate + 2 ADP + phosphate + 2 H(+). Its pathway is amino-acid biosynthesis; L-arginine biosynthesis; carbamoyl phosphate from bicarbonate: step 1/1. The protein operates within pyrimidine metabolism; UMP biosynthesis via de novo pathway; (S)-dihydroorotate from bicarbonate: step 1/3. Functionally, large subunit of the glutamine-dependent carbamoyl phosphate synthetase (CPSase). CPSase catalyzes the formation of carbamoyl phosphate from the ammonia moiety of glutamine, carbonate, and phosphate donated by ATP, constituting the first step of 2 biosynthetic pathways, one leading to arginine and/or urea and the other to pyrimidine nucleotides. The large subunit (synthetase) binds the substrates ammonia (free or transferred from glutamine from the small subunit), hydrogencarbonate and ATP and carries out an ATP-coupled ligase reaction, activating hydrogencarbonate by forming carboxy phosphate which reacts with ammonia to form carbamoyl phosphate. In Clostridium beijerinckii (strain ATCC 51743 / NCIMB 8052) (Clostridium acetobutylicum), this protein is Carbamoyl phosphate synthase large chain.